The primary structure comprises 1031 residues: Toll-like receptor 9 (1031 aa).

The signal sequence occupies residues 1–25; the sequence is MGPCHGALHPLSLLVQAAALAVALA. Over 26–817 the chain is Extracellular; the sequence is QGTLPAFLPC…LCLDEALSWD (792 aa). A disulfide bridge connects residues C35 and C45. 47–51 contacts DNA; sequence WLFLK. LRR repeat units follow at residues 62–85, 87–110, 122–147, 150–166, 167–190, 198–221, 223–242, 243–268, 283–306, 308–332, 333–356, 363–386, 390–413, 415–440, 470–494, 496–519, 520–543, 545–572, 574–598, 600–622, 627–650, 652–675, 676–699, 701–723, 724–747, and 749–772; these read RGNV…DFVH, SSLR…HFPC, VPTL…SLVS, LSRT…LAGL, HSLR…ALQV, LGNL…LPPS, EYLL…DLAN, LTAL…CMEC, LNHL…WFHA, GNLM…AFQG, LAQL…HLHL, LLSL…TLRS, LPML…IFGA, PGLR…TGEV, CKTL…MFAR, SRLQ…QFMP, LTSL…SFTE, PRLE…SFVA, LPAL…LCSA, LRAL…LYLH, LRSL…TLDN, PKSL…SLVL, LPRL…SLPN, TQLQ…FFAL, ATRL…WFGS, and AGTL…AFVD. A glycan (N-linked (GlcNAc...) asparagine) is linked at N64. Residues 72–77 and 95–109 each bind DNA; these read SNRIHH and KWNC…MHFP. A disulfide bridge links C98 with C110. N129 carries N-linked (GlcNAc...) asparagine glycosylation. Residues Y132, R152, and 179–181 each bind DNA; that span reads YYK. C178 and C184 form a disulfide bridge. N200 carries an N-linked (GlcNAc...) asparagine glycan. Y208 is a DNA binding site. Residues N210 and N242 are each glycosylated (N-linked (GlcNAc...) asparagine). Disulfide bonds link C255/C268 and C258/C265. C258 carries S-palmitoyl cysteine lipidation. Residue R262 coordinates DNA. Residue C265 is the site of S-palmitoyl cysteine attachment. A glycan (N-linked (GlcNAc...) asparagine) is linked at N340. C470 and C500 are disulfide-bonded. N-linked (GlcNAc...) asparagine glycosylation is found at N474 and N513. N567 carries an N-linked (GlcNAc...) asparagine glycan. 3 N-linked (GlcNAc...) asparagine glycosylation sites follow: N669, N694, and N699. Residue N731 is glycosylated (N-linked (GlcNAc...) asparagine). Intrachain disulfides connect C764–C790 and C766–C809. The helical transmembrane segment at 818–838 threads the bilayer; that stretch reads CFGLSLLTVALGLAVPMLHHL. Residues 839–1031 are Cytoplasmic-facing; that stretch reads CGWDLWYCFH…NFCRGPTTAE (193 aa). Positions 866-1011 constitute a TIR domain; it reads LPYDAFVVFD…SFWAQLGTAL (146 aa).

It belongs to the Toll-like receptor family. Monomer and homodimer. Exists as a monomer in the absence of unmethylated cytidine-phosphate-guanosine (CpG) ligand. Proteolytic processing of an insertion loop (Z-loop) is required for homodimerization upon binding to the unmethylated CpG ligand leading to its activation. Interacts with MYD88 via their respective TIR domains. Interacts with BTK. Interacts (via transmembrane domain) with UNC93B1. Interacts with CD300LH; the interaction may promote full activation of TLR9-triggered innate responses. Interacts with CNPY3 and HSP90B1; this interaction is required for proper folding in the endoplasmic reticulum. Interacts with SMPDL3B. Interacts with CD82; this interaction is essential for TLR9-dependent myddosome formation in response to CpG stimulation. In terms of processing, activated by proteolytic cleavage of the flexible loop between repeats LRR14 and LRR15 within the ectodomain. Cleavage requires UNC93B1. Proteolytically processed by first removing the majority of the ectodomain by either asparagine endopeptidase (AEP) or a cathepsin followed by a trimming event that is solely cathepsin mediated and required for optimal receptor signaling. Post-translationally, palmitoylated by ZDHHC3 in the Golgi regulates TLR9 trafficking from the Golgi to endosomes. Depalmitoylation by PPT1 controls the release of TLR9 from UNC93B1 in endosomes.

It is found in the endoplasmic reticulum membrane. The protein resides in the endosome. Its subcellular location is the lysosome. It localises to the cytoplasmic vesicle. The protein localises to the phagosome. Key component of innate and adaptive immunity. TLRs (Toll-like receptors) control host immune response against pathogens through recognition of molecular patterns specific to microorganisms. TLR9 is a nucleotide-sensing TLR which is activated by unmethylated cytidine-phosphate-guanosine (CpG) dinucleotides. Acts via MYD88 and TRAF6, leading to NF-kappa-B activation, cytokine secretion and the inflammatory response. Upon CpG stimulation, induces B-cell proliferation, activation, survival and antibody production. This chain is Toll-like receptor 9 (TLR9), found in Felis catus (Cat).